Here is a 404-residue protein sequence, read N- to C-terminus: MKLPIYLDYAATTPVDPRVAEKMMQHMTMDGVFGNPASRSHKYGWQAEEAVDIARNQVADLINADHREIVFTSGATESINLAIKGIAHFYHKKGKHIITSKTEHKAVLDTCRQLEREGYEVTYLEPEANGLIPLARIEDAMRDDTLLVSIMHVNNEIGVIQDVMAIGELCRSKGIIFHMDAAQSAGKLPIDVQQLKVDLISISGHKMYGPKGVGALYVRRKPRIRLESQMHGGGHERGMRSGTLATHQLVGLGEAAAIAKQDMESDNARIRTLRDKLWNGVKHIEETYINGDMEQRFCGSLNVSFNFVEGESLMMALKDLAVSSGSACTSASLEPSYVLRALGLNDEMAHSSIRFSIGRFTTDEDIDHAIKVITQSIDKLREMSPLWEMFKDGIDLDQVQWAHH.

Residues 75–76 (AT), Asn-155, Gln-183, and 203–205 (SGH) each bind pyridoxal 5'-phosphate. At Lys-206 the chain carries N6-(pyridoxal phosphate)lysine. Residue Thr-243 coordinates pyridoxal 5'-phosphate. Cys-328 acts as the Cysteine persulfide intermediate in catalysis. Cys-328 lines the [2Fe-2S] cluster pocket.

This sequence belongs to the class-V pyridoxal-phosphate-dependent aminotransferase family. NifS/IscS subfamily. Homodimer. Forms a heterotetramer with IscU, interacts with other sulfur acceptors. Pyridoxal 5'-phosphate is required as a cofactor.

Its subcellular location is the cytoplasm. The enzyme catalyses (sulfur carrier)-H + L-cysteine = (sulfur carrier)-SH + L-alanine. The protein operates within cofactor biosynthesis; iron-sulfur cluster biosynthesis. In terms of biological role, master enzyme that delivers sulfur to a number of partners involved in Fe-S cluster assembly, tRNA modification or cofactor biosynthesis. Catalyzes the removal of elemental sulfur atoms from cysteine to produce alanine. Functions as a sulfur delivery protein for Fe-S cluster synthesis onto IscU, an Fe-S scaffold assembly protein, as well as other S acceptor proteins. The protein is Cysteine desulfurase IscS of Shewanella denitrificans (strain OS217 / ATCC BAA-1090 / DSM 15013).